A 223-amino-acid chain; its full sequence is Sigma non-opioid intracellular receptor 1 (223 aa).

The Lumenal segment spans residues methionine 1–arginine 7. A helical transmembrane segment spans residues alanine 8–leucine 29. Residues serine 30–serine 223 lie on the Cytoplasmic side of the membrane. The important for ligand-binding stretch occupies residues serine 98–leucine 105. The tract at residues phenylalanine 176 to serine 223 is C-terminal hydrophobic region.

It belongs to the ERG2 family. Homotrimer.

It is found in the nucleus inner membrane. The protein localises to the nucleus outer membrane. Its subcellular location is the nucleus envelope. The protein resides in the cytoplasmic vesicle. It localises to the endoplasmic reticulum membrane. It is found in the membrane. Its function is as follows. May function in lipid transport from the endoplasmic reticulum and be involved in a wide array of cellular functions probably through regulation of the biogenesis of lipid microdomains at the plasma membrane. May regulate calcium efflux at the endoplasmic reticulum. In Taricha granulosa (Roughskin newt), this protein is Sigma non-opioid intracellular receptor 1 (SIGMAR1).